The sequence spans 500 residues: NAD(P)H-quinone oxidoreductase chain 4, chloroplastic (500 aa).

The next 14 membrane-spanning stretches (helical) occupy residues 4 to 24, 35 to 55, 87 to 107, 113 to 130, 134 to 154, 167 to 187, 208 to 228, 242 to 262, 274 to 294, 305 to 325, 330 to 350, 386 to 406, 416 to 436, and 463 to 483; these read FPWL…IFFL, YTMG…CYHF, IGPI…AWPV, LFHF…GLFS, LLLF…LLSM, FILY…GMGL, GLEI…LPII, HYST…YGLI, SIFS…AALT, IAYS…SLTN, GAIL…FLGG, LALP…GIIT, IIIT…LLSM, and FVSI…DLVI.

It belongs to the complex I subunit 4 family.

It localises to the plastid. The protein localises to the chloroplast thylakoid membrane. The catalysed reaction is a plastoquinone + NADH + (n+1) H(+)(in) = a plastoquinol + NAD(+) + n H(+)(out). The enzyme catalyses a plastoquinone + NADPH + (n+1) H(+)(in) = a plastoquinol + NADP(+) + n H(+)(out). The protein is NAD(P)H-quinone oxidoreductase chain 4, chloroplastic of Lemna minor (Common duckweed).